The chain runs to 266 residues: Undecaprenyl-diphosphatase (266 aa).

Transmembrane regions (helical) follow at residues 1–21 (MDIF…FLPI), 39–59 (QGLT…VIYF), 87–107 (WWII…KDFI), 114–134 (IEVI…ADKL), 144–164 (VGWK…IPGT), 184–204 (AARF…ILVV), 218–238 (ALVL…HYFL), and 246–266 (MTPF…VIFA).

It belongs to the UppP family.

Its subcellular location is the cell inner membrane. It carries out the reaction di-trans,octa-cis-undecaprenyl diphosphate + H2O = di-trans,octa-cis-undecaprenyl phosphate + phosphate + H(+). Its function is as follows. Catalyzes the dephosphorylation of undecaprenyl diphosphate (UPP). Confers resistance to bacitracin. This chain is Undecaprenyl-diphosphatase, found in Shewanella loihica (strain ATCC BAA-1088 / PV-4).